Here is a 332-residue protein sequence, read N- to C-terminus: Cytoskeleton protein RodZ (332 aa).

Residues 1–111 lie on the Cytoplasmic side of the membrane; that stretch reads MNTETTQDTT…LKKSRKKRDG (111 aa). The HTH cro/C1-type domain occupies 19 to 71; it reads LREARERLGLTQQTIAERLCLKITTVRDIEDGTTPADLAPTFLRGYIRSYAKL. The segment at residues 30-49 is a DNA-binding region (H-T-H motif); it reads QQTIAERLCLKITTVRDIED. The chain crosses the membrane as a helical; Signal-anchor for type II membrane protein span at residues 112–132; it reads WLMIITWLVVLVVLGLTGAWW. Residues 133–332 lie on the Periplasmic side of the membrane; sequence WQNHQAQQAE…QVARLTLTAE (200 aa). The tract at residues 149–225 is disordered; the sequence is HASSMQSQTE…PSQANATQSQ (77 aa). 2 stretches are compositionally biased toward polar residues: residues 151–160 and 168–182; these read SSMQSQTEGQ and SAPQ…AATP. A compositionally biased stretch (low complexity) spans 190–225; sequence SATIAATPSTPPSSTTASSAAPSSQSPSQANATQSQ.

Belongs to the RodZ family.

The protein localises to the cell inner membrane. Cytoskeletal protein that is involved in cell-shape control through regulation of the length of the long axis. The protein is Cytoskeleton protein RodZ of Pectobacterium atrosepticum (strain SCRI 1043 / ATCC BAA-672) (Erwinia carotovora subsp. atroseptica).